Reading from the N-terminus, the 158-residue chain is Transcription elongation factor GreA (158 aa).

This sequence belongs to the GreA/GreB family.

In terms of biological role, necessary for efficient RNA polymerase transcription elongation past template-encoded arresting sites. The arresting sites in DNA have the property of trapping a certain fraction of elongating RNA polymerases that pass through, resulting in locked ternary complexes. Cleavage of the nascent transcript by cleavage factors such as GreA or GreB allows the resumption of elongation from the new 3'terminus. GreA releases sequences of 2 to 3 nucleotides. The protein is Transcription elongation factor GreA of Pelagibacter ubique (strain HTCC1062).